Reading from the N-terminus, the 279-residue chain is Large ribosomal subunit protein uL2 (279 aa).

Disordered stretches follow at residues 34-58 and 225-279; these read LRPL…GGGH and VMNP…KNKR. The span at 251-268 shows a compositional bias: basic and acidic residues; sequence GKPEGRTRRPNKESDKLI. Residues 269-279 are compositionally biased toward basic residues; the sequence is VRRRRTGKNKR.

Belongs to the universal ribosomal protein uL2 family. Part of the 50S ribosomal subunit. Forms a bridge to the 30S subunit in the 70S ribosome.

Its function is as follows. One of the primary rRNA binding proteins. Required for association of the 30S and 50S subunits to form the 70S ribosome, for tRNA binding and peptide bond formation. It has been suggested to have peptidyltransferase activity; this is somewhat controversial. Makes several contacts with the 16S rRNA in the 70S ribosome. The protein is Large ribosomal subunit protein uL2 of Micrococcus luteus (strain ATCC 4698 / DSM 20030 / JCM 1464 / CCM 169 / CCUG 5858 / IAM 1056 / NBRC 3333 / NCIMB 9278 / NCTC 2665 / VKM Ac-2230) (Micrococcus lysodeikticus).